Here is a 436-residue protein sequence, read N- to C-terminus: Chromosomal replication initiator protein DnaA (436 aa).

The segment at Met1 to Ile69 is domain I, interacts with DnaA modulators. The tract at residues Ile69–Ser99 is domain II. The segment at Leu100–Ala314 is domain III, AAA+ region. Residues Gly144, Gly146, Lys147, and Thr148 each contribute to the ATP site. The interval Asn315–Glu436 is domain IV, binds dsDNA.

The protein belongs to the DnaA family. Oligomerizes as a right-handed, spiral filament on DNA at oriC.

The protein localises to the cytoplasm. Plays an essential role in the initiation and regulation of chromosomal replication. ATP-DnaA binds to the origin of replication (oriC) to initiate formation of the DNA replication initiation complex once per cell cycle. Binds the DnaA box (a 9 base pair repeat at the origin) and separates the double-stranded (ds)DNA. Forms a right-handed helical filament on oriC DNA; dsDNA binds to the exterior of the filament while single-stranded (ss)DNA is stabiized in the filament's interior. The ATP-DnaA-oriC complex binds and stabilizes one strand of the AT-rich DNA unwinding element (DUE), permitting loading of DNA polymerase. After initiation quickly degrades to an ADP-DnaA complex that is not apt for DNA replication. Binds acidic phospholipids. This is Chromosomal replication initiator protein DnaA from Campylobacter fetus subsp. fetus (strain 82-40).